Consider the following 525-residue polypeptide: Zinc finger C2HC domain-containing protein 1C (525 aa).

Over residues 23–34 the composition is skewed to basic and acidic residues; that stretch reads AHGLHSAKHDPY. 3 disordered regions span residues 23 to 48, 85 to 107, and 145 to 171; these read AHGL…MGHL, CPHS…GKGL, and VHRK…PDSS. A compositionally biased stretch (polar residues) spans 36–48; sequence QSDSPQRSSMGHL. The segment covering 90–102 has biased composition (low complexity); that stretch reads GISQQGSGNNAQG. Residues 207–252 adopt a coiled-coil conformation; that stretch reads TQIQRLEAAGESLQKEIRRKEILLREKLKKTEEGLRRIQREKKQAI. 3 disordered regions span residues 292 to 316, 330 to 349, and 356 to 379; these read SRNR…LSDY, NNKI…SQPA, and LQAS…EQEL. The segment covering 301–312 has biased composition (polar residues); that stretch reads CEQAQENSSPLQ. The span at 359 to 373 shows a compositional bias: low complexity; that stretch reads SSLSGTPGSSGSSSS. C2HC/C3H-type zinc fingers lie at residues 378–407 and 487–516; these read ELGK…MQGS and DYVQ…IKNR. Zn(2+) is bound by residues C382, C385, H397, C401, C491, C494, H506, and C510.

The protein belongs to the ZC2HC1 family. Zn(2+) serves as cofactor.

The sequence is that of Zinc finger C2HC domain-containing protein 1C (Zc2hc1c) from Rattus norvegicus (Rat).